The sequence spans 368 residues: Alcohol dehydrogenase 6 (368 aa).

Ser23 is subject to Phosphoserine. Residues Cys47, His69, Cys99, Cys102, Cys105, Cys113, and Cys175 each contribute to the Zn(2+) site. Residues 200–205 (GLGGVG), Asp224, Lys229, and 293–295 (VGV) contribute to the NAD(+) site.

The protein belongs to the zinc-containing alcohol dehydrogenase family. Class-V subfamily. As to quaternary structure, dimer. The cofactor is Zn(2+). As to expression, stomach and liver.

It localises to the cytoplasm. The catalysed reaction is a primary alcohol + NAD(+) = an aldehyde + NADH + H(+). It carries out the reaction a secondary alcohol + NAD(+) = a ketone + NADH + H(+). Inhibited partially by pyrazole (10 mM) in the reaction mixture containing 100 mM ethanol at pH 10.0. Its function is as follows. Alcohol dehydrogenase. Catalyzes the NAD-dependent oxidation of primary alcohols to the corresponding aldehydes. Oxidizes secondary alcohols to the corresponding ketones. The protein is Alcohol dehydrogenase 6 (ADH6) of Homo sapiens (Human).